We begin with the raw amino-acid sequence, 337 residues long: Inositol 2-dehydrogenase (337 aa).

It belongs to the Gfo/Idh/MocA family. Homotetramer.

The catalysed reaction is myo-inositol + NAD(+) = scyllo-inosose + NADH + H(+). Involved in the oxidation of myo-inositol (MI) to 2-keto-myo-inositol (2KMI or 2-inosose). This chain is Inositol 2-dehydrogenase, found in Klebsiella pneumoniae subsp. pneumoniae (strain ATCC 700721 / MGH 78578).